The sequence spans 591 residues: Phosphoglucan phosphatase LSF1, chloroplastic (591 aa).

A chloroplast-targeting transit peptide spans 1–61; that stretch reads MAFLQQISGL…RRRRVVLRVV (61 aa). The Tyrosine-protein phosphatase domain maps to 291–453; sequence RYSKITEQIY…VDDGKHDGTP (163 aa). C390 acts as the Phosphocysteine intermediate in catalysis. 390-396 lines the substrate pocket; the sequence is CTTGFDR.

The protein localises to the plastid. It localises to the chloroplast. Its function is as follows. Starch granule-associated phosphoglucan phosphatase involved in the control of starch accumulation. Participates in the regulation of the initial steps of starch degradation at the granule surface. May release a different set of phosphate groups from those removed by DSP4. The chain is Phosphoglucan phosphatase LSF1, chloroplastic (LSF1) from Arabidopsis thaliana (Mouse-ear cress).